A 155-amino-acid polypeptide reads, in one-letter code: Endoribonuclease YbeY (155 aa).

The Zn(2+) site is built by histidine 115, histidine 119, and histidine 125.

This sequence belongs to the endoribonuclease YbeY family. It depends on Zn(2+) as a cofactor.

Its subcellular location is the cytoplasm. In terms of biological role, single strand-specific metallo-endoribonuclease involved in late-stage 70S ribosome quality control and in maturation of the 3' terminus of the 16S rRNA. The protein is Endoribonuclease YbeY of Polynucleobacter asymbioticus (strain DSM 18221 / CIP 109841 / QLW-P1DMWA-1) (Polynucleobacter necessarius subsp. asymbioticus).